Here is a 644-residue protein sequence, read N- to C-terminus: Phosphatidylinositol polyphosphate 5-phosphatase type IV (644 aa).

The tract at residues 1–193 (MPSKAENLRP…RLPSLLPPRP (193 aa)) is disordered. 8 tandem repeats follow at residues 10–13 (PSEP), 15–18 (PQPP), 28–31 (PGAP), 39–42 (PPDV), 55–58 (PATP), 69–71 (PIA), 72–74 (PRP), and 75–78 (PARP). Positions 10–242 (PSEPAPQPPE…SLGPGRPRSP (233 aa)) are 13 X 4 AA repeats of P-X-X-P. Residues 78-90 (PRLERALSLDDKG) show a composition bias toward basic and acidic residues. Serine 99 carries the phosphoserine modification. Polar residues predominate over residues 107-118 (NGTSPSRGSVQS). Residues 121 to 124 (PGAP) form repeat 9. Low complexity predominate over residues 152 to 163 (GSPSSGGNPLSG). 4 repeat units span residues 169-172 (PNLP), 183-185 (PRL), 190-193 (PPRP), and 236-239 (PGRP). Residues serine 241 and serine 256 each carry the phosphoserine modification. At cysteine 641 the chain carries Cysteine methyl ester. Cysteine 641 carries S-farnesyl cysteine lipidation. The propeptide at 642–644 (SVS) is removed in mature form.

It belongs to the inositol polyphosphate 5-phosphatase family. Interacts (when prenylated) with PDE6D; this is important for normal location in cilia.

The protein resides in the cytoplasm. Its subcellular location is the cytoskeleton. It is found in the cilium axoneme. It localises to the golgi apparatus. The protein localises to the golgi stack membrane. The protein resides in the cell membrane. Its subcellular location is the cell projection. It is found in the ruffle. It localises to the nucleus. It carries out the reaction a 1,2-diacyl-sn-glycero-3-phospho-(1D-myo-inositol-4,5-bisphosphate) + H2O = a 1,2-diacyl-sn-glycero-3-phospho-(1D-myo-inositol 4-phosphate) + phosphate. The catalysed reaction is a 1,2-diacyl-sn-glycero-3-phospho-(1D-myo-inositol-3,4,5-trisphosphate) + H2O = a 1,2-diacyl-sn-glycero-3-phospho-(1D-myo-inositol-3,4-bisphosphate) + phosphate. It catalyses the reaction a 1,2-diacyl-sn-glycero-3-phospho-(1D-myo-inositol-3,5-bisphosphate) + H2O = a 1,2-diacyl-sn-glycero-3-phospho-(1D-myo-inositol-3-phosphate) + phosphate. Phosphatidylinositol (PtdIns) phosphatase that specifically hydrolyzes the 5-phosphate of phosphatidylinositol-3,4,5-trisphosphate (PtdIns(3,4,5)P3), phosphatidylinositol 4,5-bisphosphate(PtdIns(4,5)P2) and phosphatidylinositol 3,5-bisphosphate (PtdIns(3,5)P2). Specific for lipid substrates, inactive towards water soluble inositol phosphates. Plays an essential role in the primary cilium by controlling ciliary growth and phosphoinositide 3-kinase (PI3K) signaling and stability. The polypeptide is Phosphatidylinositol polyphosphate 5-phosphatase type IV (INPP5E) (Pan troglodytes (Chimpanzee)).